We begin with the raw amino-acid sequence, 400 residues long: Na(+)/H(+) antiporter NhaA (400 aa).

Transmembrane regions (helical) follow at residues 26–46 (AGGILLLFSAVVAMLLANSPL), 71–91 (LIHWINDGFMAVFFVLVGMEV), 107–127 (IFPAIAAIGGMVIPAVVYWFI), 137–157 (GWAIPMATDIAFALGIMALLS), 166–186 (IFLLALAIIDDLGAIVVIALF), 189–209 (HGLSVQALIFSAVAIIVLILL), 212–232 (FKVSALCAYMVVGAILWASVL), 233–253 (KSGVHATLAGVIIGFSIPLKG), 273–293 (FVILPLFAFANAGVSFAGIDV), 299–319 (PLLLAIASGLIIGKPVGIFGF), 340–360 (IFAVAVLCGIGFTMSMFLASL), and 373–393 (LSRLGILLGSTVSAILGYLFL).

Belongs to the NhaA Na(+)/H(+) (TC 2.A.33) antiporter family.

The protein resides in the cell inner membrane. The catalysed reaction is Na(+)(in) + 2 H(+)(out) = Na(+)(out) + 2 H(+)(in). Its function is as follows. Na(+)/H(+) antiporter that extrudes sodium in exchange for external protons. This is Na(+)/H(+) antiporter NhaA from Haemophilus influenzae (strain 86-028NP).